A 788-amino-acid polypeptide reads, in one-letter code: Protein translocase subunit SecA 2 (788 aa).

ATP-binding positions include Q86, 104–108 (GEGKT), and D493.

The protein belongs to the SecA family. In terms of assembly, monomer and homodimer. Part of the essential Sec protein translocation apparatus which comprises SecA, SecYEG and auxiliary proteins SecDF. Other proteins may also be involved.

It is found in the cell membrane. The protein resides in the cytoplasm. The enzyme catalyses ATP + H2O + cellular proteinSide 1 = ADP + phosphate + cellular proteinSide 2.. Functionally, part of the Sec protein translocase complex. Interacts with the SecYEG preprotein conducting channel. Has a central role in coupling the hydrolysis of ATP to the transfer of proteins into and across the cell membrane, serving as an ATP-driven molecular motor driving the stepwise translocation of polypeptide chains across the membrane. In Bacillus thuringiensis (strain Al Hakam), this protein is Protein translocase subunit SecA 2.